Here is a 223-residue protein sequence, read N- to C-terminus: uncharacterized protein (223 aa).

The C4-type zinc finger occupies 33 to 67 (CPICGGKGTLKAIQFIHRIPYFGEVMESTVVCERC).

The protein belongs to the ZPR1 family.

This is an uncharacterized protein from Pyrococcus horikoshii (strain ATCC 700860 / DSM 12428 / JCM 9974 / NBRC 100139 / OT-3).